A 200-amino-acid polypeptide reads, in one-letter code: Recombination protein RecR (200 aa).

The C4-type zinc-finger motif lies at Cys-60 to Cys-75. Positions Thr-83–Pro-177 constitute a Toprim domain.

The protein belongs to the RecR family.

Its function is as follows. May play a role in DNA repair. It seems to be involved in an RecBC-independent recombinational process of DNA repair. It may act with RecF and RecO. This is Recombination protein RecR from Francisella tularensis subsp. novicida (strain U112).